Consider the following 450-residue polypeptide: Homogentisate 1,2-dioxygenase (450 aa).

H304 acts as the Proton acceptor in catalysis. 2 residues coordinate Fe cation: H347 and E353. Homogentisate contacts are provided by Y362 and H383. H383 lines the Fe cation pocket.

This sequence belongs to the homogentisate dioxygenase family. Hexamer; dimer of trimers. Fe cation serves as cofactor.

It catalyses the reaction homogentisate + O2 = 4-maleylacetoacetate + H(+). Its pathway is amino-acid degradation; L-phenylalanine degradation; acetoacetate and fumarate from L-phenylalanine: step 4/6. Functionally, involved in the catabolism of homogentisate (2,5-dihydroxyphenylacetate or 2,5-OH-PhAc), a central intermediate in the degradation of phenylalanine and tyrosine. Catalyzes the oxidative ring cleavage of the aromatic ring of homogentisate to yield maleylacetoacetate. The sequence is that of Homogentisate 1,2-dioxygenase from Burkholderia thailandensis (strain ATCC 700388 / DSM 13276 / CCUG 48851 / CIP 106301 / E264).